The primary structure comprises 461 residues: Protein transport protein HofB homolog (461 aa).

Residue 222-229 coordinates ATP; that stretch reads GPTGSGKT.

It belongs to the GSP E family.

This chain is Protein transport protein HofB homolog (hofB), found in Escherichia coli (strain K12).